We begin with the raw amino-acid sequence, 1073 residues long: MITQDTPALNPTEEHYLKRELLRCQLDYEIGKLNDQFALRKFGYPFSPNDPTAPQPISNNDSSPVLGGKGHFSVNYPMLSYVLQEFISTFPLLSTNLLVDEKFWQSKVQVFFEHFMSLGFSESYDREEASKRKKVSKKLSKVILLLFNSGVGSFQEQAYYNEDKFVLQSGQARKRSNIEKFAMPTRENLENLLTNESVFINGWDVNIISVFNKNSRKCTESVDNDKSSKSTPTSSPKSHAIKSFASTSKWMKNAFNNTINSTINSMPESSASLFSKLSLGVPSTKSKQSRKHHYFLIKIKKQDDDDQDNSNEENSNLDHHAGYFYVTRTYSDFKKLSHDLKSEFPGKKCPRLPHRNKKVTSMITKTEVLHNGQTKSAAREKIVNTFDTDLQSASESDNSSFLQTTNELSATETVLTEKETETLRKNILNEIKEEDNIDEDEYEEEGEGEESDFDEYKDASDSKINTLVGEKMRTSLRQYLRTLCKDAEVSQSSSIRRFFLSGPNLDIKDINPKIADDIRNRALIDVSNLENQIRFQQMALEKSLKLQDSMKDFKTSLLKDEKYLMSLLVEIKDNTKVEDLSPLLQDFVEWCKIYISSMIYQMFLGNDNSYELYTQIRRLHKLMPYTVMGQIMKFTNPIAIMRGMIELFMAQPFGGHSLLQTMFSTILTDDLKTQKVAIKELERKIAEMDPGASVVTKCLKDFVFNNDTKDEHDTKLFTMDAVNAESESMNMPVPLIVLMKSAAANLIPDEVVAGLIESYSSWKLQKEDTDALNVTSEDQSGIYFTHVKDLWQLYIKEHDKQLMRQLWQDPELTQMLKAIVTMIYEPMVKIFKVARMDVALKNFEKFMSDLIRLVDDVINGQLGVSTQFDVVEEIHNLVTKHQDAFFEFIHDVYLNDSEGIFEGFITWITTIVKFLQKSKFGGPSERIDFNKLICRDDIDIDVKLLKVQVNNVLNKKIGARKIYKKLLDLKVKQGTKQNNKHAAGILQKNWSDINSLVMPSSSGSFGLGDGDLVDLDLDTGDYDFLHKENEVELEKQYKDLLNLVVDESEIDKLRSQVFAQELKNYLEAQIAKK.

The segment covering C218–S228 has biased composition (basic and acidic residues). The disordered stretch occupies residues C218–A240. Residues K229–S238 show a composition bias toward low complexity. A PX domain is found at L273–D506. A phosphoserine mark is found at S310 and S451. Residues I431–Y456 form a disordered region. The segment covering K432–F453 has biased composition (acidic residues).

The protein resides in the endoplasmic reticulum membrane. It is found in the lipid droplet. In terms of biological role, phosphoinositide-binding protein that plays a role in regulation of ergosterol distribution in the cell. Facilitates ergosterol transport between plasma membrane and lipid droplets. The sequence is that of PX domain-containing protein LEC1 from Saccharomyces cerevisiae (strain ATCC 204508 / S288c) (Baker's yeast).